We begin with the raw amino-acid sequence, 670 residues long: Probable metal-nicotianamine transporter YSL4 (670 aa).

13 consecutive transmembrane segments (helical) span residues 35–55 (ITIR…IITH), 59–79 (LTIG…FFFI), 107–127 (CVVS…LIAM), 151–171 (GLWW…FCLV), 273–293 (LVNC…WPFI), 318–338 (VFIA…KIIV), 389–409 (FAVS…PLIF), 416–436 (FVLC…YGAG), 450–470 (GLFI…GLAA), 507–527 (LGTA…WTAF), 559–579 (PKHC…VNLI), 601–621 (FYIG…MLVW), and 636–656 (VASG…ILSI).

Belongs to the YSL (TC 2.A.67.2) family.

It is found in the membrane. Functionally, may be involved in the transport of nicotianamine-chelated metals. This chain is Probable metal-nicotianamine transporter YSL4 (YSL4), found in Arabidopsis thaliana (Mouse-ear cress).